Reading from the N-terminus, the 188-residue chain is Probable nicotinate-nucleotide adenylyltransferase (188 aa).

The protein belongs to the NadD family.

The enzyme catalyses nicotinate beta-D-ribonucleotide + ATP + H(+) = deamido-NAD(+) + diphosphate. It participates in cofactor biosynthesis; NAD(+) biosynthesis; deamido-NAD(+) from nicotinate D-ribonucleotide: step 1/1. In terms of biological role, catalyzes the reversible adenylation of nicotinate mononucleotide (NaMN) to nicotinic acid adenine dinucleotide (NaAD). In Salinispora tropica (strain ATCC BAA-916 / DSM 44818 / JCM 13857 / NBRC 105044 / CNB-440), this protein is Probable nicotinate-nucleotide adenylyltransferase.